The following is a 242-amino-acid chain: MTSSFTDYCKFFNRILSEVQETQEQAIIKGAHLVSEAVMNGGRFYVFGSGHSHMIAEEIYNRAGGLALVTAILPPELMLHERPNKSTYLERIEGLSKSYLKLHQVTNKDVIMIISNSGRNTVPVEMAIESRNIGAKVIAMTSMKHSQKVTSRHKSGKKLYEYADVVLDNGAPVGDAGFQIANSEIYSGATSDSIGCFLAQALIVETLHLLVQQGFEPPVFKSSNVDGADLYNDKIFNEYVKW.

An SIS domain is found at 34 to 217; that stretch reads VSEAVMNGGR…HLLVQQGFEP (184 aa).

The protein belongs to the UPF0309 family.

This chain is UPF0309 protein BH3325, found in Halalkalibacterium halodurans (strain ATCC BAA-125 / DSM 18197 / FERM 7344 / JCM 9153 / C-125) (Bacillus halodurans).